The primary structure comprises 620 residues: Rhamnogalacturonan endolyase YesW (620 aa).

Positions 1–37 are cleaved as a signal peptide; the sequence is MRRSCLMIRRRKRMFTAVTLLVLLVMGTSVCPVKAEG. The tract at residues 133 to 152 is disordered; it reads LDKPAGGTTPKGESYTYSAN. Asn152 contacts substrate. Ca(2+) is bound by residues Asp153, Asp158, Asp160, Asp162, Gln164, and Glu166. Substrate is bound at residue Asp172. 2 residues coordinate a carbohydrate: Asp187 and Lys207. Positions 222, 224, 226, 228, and 230 each coordinate Ca(2+). Residues Gly238 and Arg255 each contribute to the a carbohydrate site. Residues His363, Asp369, Asp371, Asp373, Lys375, Glu377, Asp386, His387, His399, Asp401, Asp407, Asp409, Arg412, Gly414, Glu416, and Glu422 each coordinate Ca(2+). Arg452 is a binding site for substrate. Ca(2+) contacts are provided by Asp457, Asp459, Tyr462, Gly464, Glu466, Asp496, Asp498, Leu500, and Glu502. Residue 532–534 participates in substrate binding; it reads NGT. Ca(2+) contacts are provided by Asp543, Leu545, Asp547, Arg549, Glu551, Asn592, and Ala594. Tyr595 provides a ligand contact to substrate. Asn596 contributes to the Ca(2+) binding site.

The protein belongs to the polysaccharide lyase 11 family. In terms of assembly, monomer. Requires Ca(2+) as cofactor. The cofactor is Mn(2+).

It localises to the secreted. It catalyses the reaction Endotype eliminative cleavage of L-alpha-rhamnopyranosyl-(1-&gt;4)-alpha-D-galactopyranosyluronic acid bonds of rhamnogalacturonan I domains in ramified hairy regions of pectin leaving L-rhamnopyranose at the reducing end and 4-deoxy-4,5-unsaturated D-galactopyranosyluronic acid at the non-reducing end.. Functionally, pectinolytic enzyme that degrades type I rhamnogalacturonan from plant cell walls and releases oligosaccharide products. Degrades rhamnogalacturonan, polygalacturonic acid, pectic acid and pectin. The sequence is that of Rhamnogalacturonan endolyase YesW (yesW) from Bacillus subtilis (strain 168).